Reading from the N-terminus, the 279-residue chain is Replication protein A 32 kDa subunit A (279 aa).

A disordered region spans residues 1–33; the sequence is MFSSSQFEPNSGFSGGGFMSSQPSQAYESSSST. Residues 19 to 32 are compositionally biased toward low complexity; sequence MSSQPSQAYESSSS. The segment at residues 73 to 148 is a DNA-binding region (OB); it reads VSLVGLVCDK…QLLVFSVRPI (76 aa).

Belongs to the replication factor A protein 2 family. In terms of assembly, heterotrimer of RPA1, RPA2 and RPA3 (canonical replication protein A complex). Interacts with ROS1. Binds to ASE1/At3g02920, PDX2, At5g62350, RPA1A/At2g06510, ARF1/At1g10630, At4g18590 and At3g52630. In terms of processing, phosphorylated in a cell-cycle-dependent manner (from the S phase until mitosis). In response to DNA damage, recruited to DNA-repair nuclear foci, as a hypophosphorylated form. Strongly expressed in shoot and root meristems. Present in seedlings, roots, leaves, siliques and flowers.

Its subcellular location is the nucleus. Functionally, component of the replication protein A complex (RPA) required for DNA recombination, repair and replication. The activity of RPA is mediated by single-stranded DNA binding and protein interactions. Required fo cell division in meristems. Involved in the maintenance of transcriptional epigenetic gene silencing (TGS) at specific loci (including some transposons) by regulating histone H3 acetylation, 'Lys-4' and 'Lys-9' methylation. The polypeptide is Replication protein A 32 kDa subunit A (RPA2A) (Arabidopsis thaliana (Mouse-ear cress)).